Reading from the N-terminus, the 490-residue chain is Betaine aldehyde dehydrogenase (490 aa).

Residue Asp93 participates in K(+) binding. 150-152 (GAW) lines the NAD(+) pocket. Catalysis depends on Lys162, which acts as the Charge relay system. Residue 176-179 (KPSE) coordinates NAD(+). Position 180 (Val180) interacts with K(+). NAD(+) is bound at residue 230–233 (GIAS). Position 246 (Leu246) interacts with K(+). Catalysis depends on Glu252, which acts as the Proton acceptor. NAD(+) contacts are provided by Gly254, Cys286, and Glu387. Cys286 serves as the catalytic Nucleophile. Residue Cys286 is modified to Cysteine sulfenic acid (-SOH). Residues Lys457 and Gly460 each coordinate K(+). Glu464 (charge relay system) is an active-site residue.

The protein belongs to the aldehyde dehydrogenase family. As to quaternary structure, dimer of dimers. K(+) is required as a cofactor.

The catalysed reaction is betaine aldehyde + NAD(+) + H2O = glycine betaine + NADH + 2 H(+). It functions in the pathway amine and polyamine biosynthesis; betaine biosynthesis via choline pathway; betaine from betaine aldehyde: step 1/1. In terms of biological role, involved in the biosynthesis of the osmoprotectant glycine betaine. Catalyzes the irreversible oxidation of betaine aldehyde to the corresponding acid. The protein is Betaine aldehyde dehydrogenase of Pectobacterium carotovorum subsp. carotovorum (strain PC1).